Reading from the N-terminus, the 131-residue chain is Chromatin accessibility complex protein 1 (131 aa).

An N-acetylalanine modification is found at alanine 2. Residues 100–124 (ASKYLKMLKEEKREEDEENDNDNES) adopt a coiled-coil conformation. Lysine 102 bears the N6-acetyllysine mark. The interval 109-131 (EEKREEDEENDNDNESDHDEADS) is disordered. Acidic residues predominate over residues 112-131 (REEDEENDNDNESDHDEADS). A Phosphoserine modification is found at serine 124.

Heterodimer with POLE3; binds to DNA. Component of the CHRAC ISWI chromatin remodeling complex at least composed of SMARCA5/SNF2H, BAZ1A/ACF1, CHRAC1 and POLE3; the complex preferentially binds DNA through the CHRAC1-POLE3 heterodimer and possesses ATP-dependent nucleosome-remodeling activity. Within the complex, the heterodimer with POLE3 interacts with SMARCA5/SNF2H; the interaction is direct and enhances nucleosome sliding activity by the SMARCA5/SNF2H and BAZ1A/ACF1 interaction. Within the complex, the heterodimer with POLE3 interacts with BAZ1A/ACF1; the interactions are direct. As to expression, expressed in heart, brain, placenta, lung, liver, skeletal muscle, kidney and pancreas.

The protein localises to the nucleus. In terms of biological role, forms a complex with DNA polymerase epsilon subunit POLE3 and binds naked DNA, which is then incorporated into chromatin, aided by the nucleosome remodeling activity of ISWI/SNF2H and ACF1. Does not enhance nucleosome sliding activity of the ACF-5 ISWI chromatin remodeling complex. The chain is Chromatin accessibility complex protein 1 (CHRAC1) from Homo sapiens (Human).